A 316-amino-acid chain; its full sequence is Pantothenate kinase (316 aa).

Position 95–102 (glycine 95–serine 102) interacts with ATP.

Belongs to the prokaryotic pantothenate kinase family.

Its subcellular location is the cytoplasm. The enzyme catalyses (R)-pantothenate + ATP = (R)-4'-phosphopantothenate + ADP + H(+). The protein operates within cofactor biosynthesis; coenzyme A biosynthesis; CoA from (R)-pantothenate: step 1/5. The chain is Pantothenate kinase from Haemophilus ducreyi (strain 35000HP / ATCC 700724).